Here is a 111-residue protein sequence, read N- to C-terminus: DNA-directed RNA polymerase subunit Rpo11 (111 aa).

It belongs to the archaeal Rpo11/eukaryotic RPB11/RPC19 RNA polymerase subunit family. As to quaternary structure, part of the RNA polymerase complex.

The protein localises to the cytoplasm. The enzyme catalyses RNA(n) + a ribonucleoside 5'-triphosphate = RNA(n+1) + diphosphate. Functionally, DNA-dependent RNA polymerase (RNAP) catalyzes the transcription of DNA into RNA using the four ribonucleoside triphosphates as substrates. The sequence is that of DNA-directed RNA polymerase subunit Rpo11 from Thermoplasma acidophilum (strain ATCC 25905 / DSM 1728 / JCM 9062 / NBRC 15155 / AMRC-C165).